The following is a 266-amino-acid chain: MDTFQVIILALIQGLTEFLPISSSAHLILPAQLLGWEDQGLSFDVAVNTGSLFAVVIYFRNELWAMFKAWIASMVKGQHSDDSKLAWWIILATLPAVFFGFIAKDFIETHLRSAGVIAVTTIVFGLLLWWADKMSRRDLTVYQTGWRKALLIGFAQALALIPGTSRSGATMTAALMLGLSRDAAARFSFLMSVPVSLGAAILVGKDLAESPLPIDFQALTLGTVISFVAAYLCIHYFLKIISRMGMTPFVIYRLILGAVLCGFIFL.

Transmembrane regions (helical) follow at residues 1–21 (MDTF…FLPI), 39–59 (QGLS…VIYF), 87–107 (WWII…KDFI), 111–131 (LRSA…LWWA), 149–169 (ALLI…RSGA), 183–203 (AAAR…AILV), 218–238 (ALTL…HYFL), and 246–266 (MTPF…FIFL).

It belongs to the UppP family.

Its subcellular location is the cell inner membrane. The catalysed reaction is di-trans,octa-cis-undecaprenyl diphosphate + H2O = di-trans,octa-cis-undecaprenyl phosphate + phosphate + H(+). Functionally, catalyzes the dephosphorylation of undecaprenyl diphosphate (UPP). Confers resistance to bacitracin. The chain is Undecaprenyl-diphosphatase from Shewanella sp. (strain MR-4).